Here is a 187-residue protein sequence, read N- to C-terminus: Threonylcarbamoyl-AMP synthase (187 aa).

In terms of domain architecture, YrdC-like spans 4–187 (TLTLSEAVTA…DARSGHILRL (184 aa)).

This sequence belongs to the SUA5 family. TsaC subfamily.

It localises to the cytoplasm. The catalysed reaction is L-threonine + hydrogencarbonate + ATP = L-threonylcarbamoyladenylate + diphosphate + H2O. Functionally, required for the formation of a threonylcarbamoyl group on adenosine at position 37 (t(6)A37) in tRNAs that read codons beginning with adenine. Catalyzes the conversion of L-threonine, HCO(3)(-)/CO(2) and ATP to give threonylcarbamoyl-AMP (TC-AMP) as the acyladenylate intermediate, with the release of diphosphate. This chain is Threonylcarbamoyl-AMP synthase, found in Xylella fastidiosa (strain M23).